The chain runs to 412 residues: MKIYLVGGAVRDALLGLPVKDRDWVVVGSTPQEMLDAGYQQVGRDFPVFLHPQTHEEYALARTERKSGSGYTGFTCYAAPDVTLEDDLKRRDLTINALAQDDNGEIIDPYNGLGDLQNRLLRHVSPAFGEDPLRVLRVARFAARYAHLGFRIADETLTLMREMTHAGELEHLTPERVWKETESALTTRNPQVFFQVLRDCGALRVLFPEIDALFGVPAPARWHPEIDTGIHTLMTLSMAAMLSPQVDVRFATLCHDLGKGLTPPELWPRHHGHGPAGVKLVEQLCQRLRVPNEIRDLARLVAEFHDLIHTFPMLNPKTIVKLFDSIDAWRKPQRVEQLALTSEADVRGRTGFESADYPQGRWLREAWEVAQSVPTKAVVEAGFKGVEIREELTRRRIAAIASWKEQRCPKPD.

ATP contacts are provided by Gly-8 and Arg-11. Residues Gly-8 and Arg-11 each contribute to the CTP site. 2 residues coordinate Mg(2+): Asp-21 and Asp-23. The ATP site is built by Arg-91, Arg-137, and Arg-140. CTP is bound by residues Arg-91, Arg-137, and Arg-140. In terms of domain architecture, HD spans 228–329; sequence TGIHTLMTLS…VKLFDSIDAW (102 aa).

This sequence belongs to the tRNA nucleotidyltransferase/poly(A) polymerase family. Bacterial CCA-adding enzyme type 1 subfamily. Monomer. Can also form homodimers and oligomers. It depends on Mg(2+) as a cofactor. Requires Ni(2+) as cofactor.

It catalyses the reaction a tRNA precursor + 2 CTP + ATP = a tRNA with a 3' CCA end + 3 diphosphate. It carries out the reaction a tRNA with a 3' CCA end + 2 CTP + ATP = a tRNA with a 3' CCACCA end + 3 diphosphate. In terms of biological role, catalyzes the addition and repair of the essential 3'-terminal CCA sequence in tRNAs without using a nucleic acid template. Adds these three nucleotides in the order of C, C, and A to the tRNA nucleotide-73, using CTP and ATP as substrates and producing inorganic pyrophosphate. tRNA 3'-terminal CCA addition is required both for tRNA processing and repair. Also involved in tRNA surveillance by mediating tandem CCA addition to generate a CCACCA at the 3' terminus of unstable tRNAs. While stable tRNAs receive only 3'-terminal CCA, unstable tRNAs are marked with CCACCA and rapidly degraded. This is Multifunctional CCA protein from Escherichia coli O139:H28 (strain E24377A / ETEC).